A 199-amino-acid chain; its full sequence is Putative pseudouridine methyltransferase (199 aa).

M132 and C186 together coordinate S-adenosyl-L-methionine.

Belongs to the methyltransferase superfamily. TrmY family.

It is found in the cytoplasm. The sequence is that of Putative pseudouridine methyltransferase from Vibrio atlanticus (strain LGP32) (Vibrio splendidus (strain Mel32)).